We begin with the raw amino-acid sequence, 593 residues long: Arginine--tRNA ligase (593 aa).

The 'HIGH' region signature appears at alanine 138–histidine 148.

The protein belongs to the class-I aminoacyl-tRNA synthetase family. In terms of assembly, monomer.

The protein resides in the cytoplasm. The enzyme catalyses tRNA(Arg) + L-arginine + ATP = L-arginyl-tRNA(Arg) + AMP + diphosphate. The sequence is that of Arginine--tRNA ligase from Burkholderia orbicola (strain MC0-3).